The primary structure comprises 556 residues: Dihydroxy-acid dehydratase (556 aa).

Asp78 contributes to the Mg(2+) binding site. Cys119 contacts [2Fe-2S] cluster. Asp120 and Lys121 together coordinate Mg(2+). Lys121 carries the N6-carboxylysine modification. Position 191 (Cys191) interacts with [2Fe-2S] cluster. Position 442 (Glu442) interacts with Mg(2+). Ser468 functions as the Proton acceptor in the catalytic mechanism.

The protein belongs to the IlvD/Edd family. As to quaternary structure, homodimer. It depends on [2Fe-2S] cluster as a cofactor. Requires Mg(2+) as cofactor.

The enzyme catalyses (2R)-2,3-dihydroxy-3-methylbutanoate = 3-methyl-2-oxobutanoate + H2O. It catalyses the reaction (2R,3R)-2,3-dihydroxy-3-methylpentanoate = (S)-3-methyl-2-oxopentanoate + H2O. The protein operates within amino-acid biosynthesis; L-isoleucine biosynthesis; L-isoleucine from 2-oxobutanoate: step 3/4. It functions in the pathway amino-acid biosynthesis; L-valine biosynthesis; L-valine from pyruvate: step 3/4. Functions in the biosynthesis of branched-chain amino acids. Catalyzes the dehydration of (2R,3R)-2,3-dihydroxy-3-methylpentanoate (2,3-dihydroxy-3-methylvalerate) into 2-oxo-3-methylpentanoate (2-oxo-3-methylvalerate) and of (2R)-2,3-dihydroxy-3-methylbutanoate (2,3-dihydroxyisovalerate) into 2-oxo-3-methylbutanoate (2-oxoisovalerate), the penultimate precursor to L-isoleucine and L-valine, respectively. The sequence is that of Dihydroxy-acid dehydratase from Clostridium kluyveri (strain NBRC 12016).